The primary structure comprises 199 residues: Protein-methionine-sulfoxide reductase heme-binding subunit MsrQ (199 aa).

4 consecutive transmembrane segments (helical) span residues 10-30 (WLKV…FWAI), 82-102 (LWCF…ELGI), 116-136 (PYLT…LTST), and 153-173 (VVYL…KILS).

The protein belongs to the MsrQ family. Heterodimer of a catalytic subunit (MsrP) and a heme-binding subunit (MsrQ). FMN serves as cofactor. Heme b is required as a cofactor.

Its subcellular location is the cell inner membrane. In terms of biological role, part of the MsrPQ system that repairs oxidized periplasmic proteins containing methionine sulfoxide residues (Met-O), using respiratory chain electrons. Thus protects these proteins from oxidative-stress damage caused by reactive species of oxygen and chlorine generated by the host defense mechanisms. MsrPQ is essential for the maintenance of envelope integrity under bleach stress, rescuing a wide series of structurally unrelated periplasmic proteins from methionine oxidation, including the primary periplasmic chaperone SurA and the lipoprotein Pal. MsrQ provides electrons for reduction to the reductase catalytic subunit MsrP, using the quinone pool of the respiratory chain. This Salmonella agona (strain SL483) protein is Protein-methionine-sulfoxide reductase heme-binding subunit MsrQ.